A 1341-amino-acid polypeptide reads, in one-letter code: Subtilisin-like protease 2 (1341 aa).

An N-terminal signal peptide occupies residues 1-18 (MLNIIYVVSLILIKFIFY). A propeptide spans 19-686 (KECNNNNNYY…KLYNNKYSFL (668 aa)) (inhibition peptide). Disordered regions lie at residues 85-107 (EKKT…EKKK) and 143-171 (ADVS…NYKN). Asn-165, Asn-343, Asn-449, Asn-453, and Asn-492 each carry an N-linked (GlcNAc...) asparagine glycan. Positions 415–474 (KKSKKEKENTQQKGGNNPNVDINILNNNNNNNNNNNSNNNSNSMNDEEINYNNNNNNKES) are disordered. Residues 430 to 474 (NNPNVDINILNNNNNNNNNNNSNNNSNSMNDEEINYNNNNNNKES) are compositionally biased toward low complexity. Residues 499–530 (IYHNKNDNSYKNKKEGTGKNNDNNDPNNNNNK) are disordered. A compositionally biased stretch (basic and acidic residues) spans 502–515 (NKNDNSYKNKKEGT). Over residues 517–530 (KNNDNNDPNNNNNK) the composition is skewed to low complexity. N-linked (GlcNAc...) asparagine glycosylation is found at Asn-550, Asn-641, and Asn-728. The Extracellular portion of the chain corresponds to 687-1136 (NKFLNIEPLI…LYNLYEYDSH (450 aa)). Positions 726 to 1019 (TWNLSIIRVF…DSLVNAEGAV (294 aa)) constitute a Peptidase S8 domain. Active-site charge relay system residues include Asp-754 and His-797. N-linked (GlcNAc...) asparagine glycans are attached at residues Asn-820, Asn-856, Asn-892, and Asn-950. Residue Ser-960 is the Charge relay system of the active site. Asn-1009 and Asn-1105 each carry an N-linked (GlcNAc...) asparagine glycan. The chain crosses the membrane as a helical span at residues 1137-1157 (YLLASVILFFLALLSIFVGMI). Residues 1158–1341 (YMKSRKHSDK…MNQLDDMFMK (184 aa)) are Cytoplasmic-facing.

This sequence belongs to the peptidase S8 family. In terms of processing, proteolytically cleaved at the N-terminus to generate a 74kDa intermediate which is further processed into a 72kDa form. The first maturation cleavage is autocatalytic, occurs in the ER and is necessary for the subsequent SUB2 trafficking to the microneme. The second cleavage may be mediated by PMX/plasmepsin X.

It is found in the cell membrane. It localises to the cytoplasmic vesicle. The protein resides in the secretory vesicle. The protein localises to the microneme membrane. The enzyme catalyses Hydrolysis of proteins with broad specificity for peptide bonds, and a preference for a large uncharged residue in P1. Hydrolyzes peptide amides.. Activation may be calcium-dependent. Inhibited by the non-covalent interaction with the cleaved propeptide. Its function is as follows. Serine protease which plays an essential role in the shedding of AMA1, MSP1 and MSP7 from the surface of the invading merozoite; this step is essential for productive invasion and the release of the adhesion between the erythrocyte and the merozoite. May cleave TRAMP/PTTRAMP, thereby shedding TRAMP from the merozoite surface during erythrocyte invasion. The chain is Subtilisin-like protease 2 from Plasmodium falciparum (isolate 3D7).